We begin with the raw amino-acid sequence, 226 residues long: 3-dehydroquinate dehydratase (226 aa).

Residues 33 to 35 and Arg-65 each bind 3-dehydroquinate; that span reads EWR. Residue His-121 is the Proton donor/acceptor of the active site. Residue Lys-146 is the Schiff-base intermediate with substrate of the active site. The 3-dehydroquinate site is built by Arg-188, Ser-207, and Gln-211.

The protein belongs to the type-I 3-dehydroquinase family. As to quaternary structure, homodimer.

The catalysed reaction is 3-dehydroquinate = 3-dehydroshikimate + H2O. It functions in the pathway metabolic intermediate biosynthesis; chorismate biosynthesis; chorismate from D-erythrose 4-phosphate and phosphoenolpyruvate: step 3/7. Functionally, involved in the third step of the chorismate pathway, which leads to the biosynthesis of aromatic amino acids. Catalyzes the cis-dehydration of 3-dehydroquinate (DHQ) and introduces the first double bond of the aromatic ring to yield 3-dehydroshikimate. This Lactococcus lactis subsp. lactis (strain IL1403) (Streptococcus lactis) protein is 3-dehydroquinate dehydratase.